A 545-amino-acid chain; its full sequence is Chaperonin GroEL (545 aa).

Residues 29–32 (TIGP), 86–90 (DGTTT), glycine 413, 478–480 (NAA), and aspartate 494 each bind ATP.

This sequence belongs to the chaperonin (HSP60) family. In terms of assembly, forms a cylinder of 14 subunits composed of two heptameric rings stacked back-to-back. Interacts with the co-chaperonin GroES.

The protein localises to the cytoplasm. The catalysed reaction is ATP + H2O + a folded polypeptide = ADP + phosphate + an unfolded polypeptide.. Together with its co-chaperonin GroES, plays an essential role in assisting protein folding. The GroEL-GroES system forms a nano-cage that allows encapsulation of the non-native substrate proteins and provides a physical environment optimized to promote and accelerate protein folding. The polypeptide is Chaperonin GroEL (Exiguobacterium sibiricum (strain DSM 17290 / CCUG 55495 / CIP 109462 / JCM 13490 / 255-15)).